The chain runs to 117 residues: Small ribosomal subunit protein uS12c (117 aa).

A disordered region spans residues 9–40 (RNARQPIENRKKSPALRGCPQRRGTITPKKPN).

Belongs to the universal ribosomal protein uS12 family. Part of the 30S ribosomal subunit.

The protein localises to the plastid. Its subcellular location is the chloroplast. With S4 and S5 plays an important role in translational accuracy. Located at the interface of the 30S and 50S subunits. The polypeptide is Small ribosomal subunit protein uS12c (rps12) (Pinus koraiensis (Korean pine)).